Here is a 148-residue protein sequence, read N- to C-terminus: Hemoglobin subunit beta-B (148 aa).

One can recognise a Globin domain in the interval 3-148 (DWTDAERAAI…VVSALGRQYH (146 aa)). Heme b contacts are provided by histidine 64 and histidine 93.

The protein belongs to the globin family. As to quaternary structure, heterotetramer of two alpha chains and two beta chains. As to expression, red blood cells.

Involved in oxygen transport from gills to the various peripheral tissues. This chain is Hemoglobin subunit beta-B (hbb2), found in Seriola quinqueradiata (Five-ray yellowtail).